Consider the following 270-residue polypeptide: Probable feruloyl esterase C (270 aa).

Positions 1–21 are cleaved as a signal peptide; sequence MIKSIILQAIMVLSTLTSVHG. A glycan (N-linked (GlcNAc...) asparagine) is linked at asparagine 23.

It belongs to the faeC family.

The protein resides in the secreted. It catalyses the reaction feruloyl-polysaccharide + H2O = ferulate + polysaccharide.. Involved in degradation of plant cell walls. Hydrolyzes the feruloyl-arabinose ester bond in arabinoxylans, and the feruloyl-galactose ester bond in pectin. Active against paranitrophenyl-acetate, methyl ferulate and wheat arabinoxylan. The polypeptide is Probable feruloyl esterase C (faeC) (Aspergillus oryzae (strain ATCC 42149 / RIB 40) (Yellow koji mold)).